Reading from the N-terminus, the 1433-residue chain is Probable ATP-dependent RNA helicase spindle-E (1433 aa).

The interval 76–98 (NRTLDELDSDDEEENMQEQPSVR) is disordered. The segment covering 81-91 (ELDSDDEEENM) has biased composition (acidic residues). The Helicase ATP-binding domain occupies 127-294 (MKAIRENPVV…FATSSAFPPV (168 aa)). Position 140 to 147 (140 to 147 (GETGCGKT)) interacts with ATP. The DEAH box motif lies at 240–243 (DEVH). Residues 354–526 (QSLQSYEEAK…NSVLKAKELE (173 aa)) enclose the Helicase C-terminal domain. One can recognise a Tudor domain in the interval 937–1000 (ASAVTKGLQL…RLMPHELKRD (64 aa)).

Belongs to the DEAD box helicase family. DEAH subfamily.

It localises to the cytoplasm. It carries out the reaction ATP + H2O = ADP + phosphate + H(+). In terms of biological role, probable ATP-binding RNA helicase which plays a central role during spermatogenesis and oogenesis by repressing transposable elements and preventing their mobilization, which is essential for the germline integrity. Acts via the piRNA metabolic process, which mediates the repression of transposable elements during meiosis by forming complexes composed of piRNAs and Piwi and govern the methylation and subsequent repression of transposons. Involved in the repression of LTR retrotransposon copia. Also involved in telomere regulation by repressing specialized telomeric retroelements HeT-A, TAHRE, and TART; Drosophila telomeres being maintained by transposition of specialized telomeric retroelements. Involved in telomeric trans-silencing, a repression mechanism by which a transposon or a transgene inserted in subtelomeric heterochromatin has the capacity to repress in trans in the female germline, a homologous transposon, or transgene located in euchromatin. Involved in the repression of testis-expressed Stellate genes by the homologous Su(Ste) repeats. Required for anteroposterior and dorsoventral axis formation during oogenesis. This is Probable ATP-dependent RNA helicase spindle-E (spn-E) from Drosophila virilis (Fruit fly).